The following is a 531-amino-acid chain: MAAKQLQFDEEARRSLERGVDTLADTVKVTLGPKGRYVVLDKKWGAPTITNDGVTVAKEVDLTDPYENLGAQLAKEVATKTNDVAGDGTTTATVLAQALVHEGLRAVASGANPVGLKRGIEKAVDAVVEELRSISRAIDTTSDMASVATISSRDETIGALIAEAFDKVGKDGVITVDESQTFGTELDFTEGMQFDKGYLSPYMVTDQDRMEAVIEDPYILIHSGKISSMNDLLPLLEKVIAAHGSLFIVAEDVDGEALSTLVVNKIRGTFSSVAVKAPAFGDRRKAMLQDIATLTGGQVVAPEVGLKLDQVGLEVLGRAKKVVVTKDNTTIVDGAGDKADVEGRVIQLRAEYDNSDSEWDREKLQERIAKLAGGVCVIRVGAATEVELNEKKHRIEDAVSATRAAIEEGIVAGGGSALIHAAHVLDGDLHLEGDEKAGVQIVAKAVREPLRWIAENGGEPGYVIVSKVAEMEPGHGYNGKTGQYVDLIADGVIDPLKVTRSALANAASIASLLLTTETLVVDKPEEDNEDK.

ATP contacts are provided by residues 30–33 (TLGP), 87–91 (DGTTT), G414, and D494.

It belongs to the chaperonin (HSP60) family. In terms of assembly, forms a cylinder of 14 subunits composed of two heptameric rings stacked back-to-back. Interacts with the co-chaperonin GroES.

It localises to the cytoplasm. It carries out the reaction ATP + H2O + a folded polypeptide = ADP + phosphate + an unfolded polypeptide.. Together with its co-chaperonin GroES, plays an essential role in assisting protein folding. The GroEL-GroES system forms a nano-cage that allows encapsulation of the non-native substrate proteins and provides a physical environment optimized to promote and accelerate protein folding. In Cutibacterium acnes (strain DSM 16379 / KPA171202) (Propionibacterium acnes), this protein is Chaperonin GroEL 2.